The chain runs to 189 residues: dTTP/UTP pyrophosphatase (189 aa).

The Proton acceptor role is filled by Asp-73.

Belongs to the Maf family. YhdE subfamily. It depends on a divalent metal cation as a cofactor.

Its subcellular location is the cytoplasm. The enzyme catalyses dTTP + H2O = dTMP + diphosphate + H(+). It catalyses the reaction UTP + H2O = UMP + diphosphate + H(+). Nucleoside triphosphate pyrophosphatase that hydrolyzes dTTP and UTP. May have a dual role in cell division arrest and in preventing the incorporation of modified nucleotides into cellular nucleic acids. The sequence is that of dTTP/UTP pyrophosphatase from Vibrio parahaemolyticus serotype O3:K6 (strain RIMD 2210633).